We begin with the raw amino-acid sequence, 61 residues long: Large ribosomal subunit protein uL30 (61 aa).

It belongs to the universal ribosomal protein uL30 family. Part of the 50S ribosomal subunit.

This chain is Large ribosomal subunit protein uL30, found in Treponema denticola (strain ATCC 35405 / DSM 14222 / CIP 103919 / JCM 8153 / KCTC 15104).